A 173-amino-acid chain; its full sequence is tRNA-specific adenosine deaminase (173 aa).

The CMP/dCMP-type deaminase domain maps to 9 to 121; the sequence is EFDEKMMRYA…DYKTGAIGSR (113 aa). His61 contributes to the Zn(2+) binding site. The active-site Proton donor is the Glu63. Zn(2+) is bound by residues Cys91 and Cys94.

Belongs to the cytidine and deoxycytidylate deaminase family. As to quaternary structure, homodimer. Zn(2+) serves as cofactor.

The enzyme catalyses adenosine(34) in tRNA + H2O + H(+) = inosine(34) in tRNA + NH4(+). In terms of biological role, catalyzes the deamination of adenosine to inosine at the wobble position 34 of tRNA(Arg2). The sequence is that of tRNA-specific adenosine deaminase from Haemophilus influenzae (strain ATCC 51907 / DSM 11121 / KW20 / Rd).